Reading from the N-terminus, the 179-residue chain is Large ribosomal subunit protein uL5 (179 aa).

It belongs to the universal ribosomal protein uL5 family. Part of the 50S ribosomal subunit; part of the 5S rRNA/L5/L18/L25 subcomplex. Contacts the 5S rRNA and the P site tRNA. Forms a bridge to the 30S subunit in the 70S ribosome.

Functionally, this is one of the proteins that bind and probably mediate the attachment of the 5S RNA into the large ribosomal subunit, where it forms part of the central protuberance. In the 70S ribosome it contacts protein S13 of the 30S subunit (bridge B1b), connecting the 2 subunits; this bridge is implicated in subunit movement. Contacts the P site tRNA; the 5S rRNA and some of its associated proteins might help stabilize positioning of ribosome-bound tRNAs. This chain is Large ribosomal subunit protein uL5, found in Synechococcus sp. (strain RCC307).